A 190-amino-acid polypeptide reads, in one-letter code: Secreted isochorismatase effector Isc1 (190 aa).

Catalysis depends on residues Asp26, Lys100, and Cys133.

The protein belongs to the isochorismatase family.

Its subcellular location is the secreted. It localises to the host cytoplasm. The protein localises to the host nucleus. It catalyses the reaction isochorismate + H2O = (2S,3S)-2,3-dihydroxy-2,3-dihydrobenzoate + pyruvate. Its function is as follows. Secreted isochorismatase required for full virulence of V.dahliae. Suppresses salicylate-mediated innate immunity of the host by disrupting the plant salicylate metabolism pathway via hydrolysis of its isochorismate precursor. This is Secreted isochorismatase effector Isc1 from Verticillium dahliae (strain VdLs.17 / ATCC MYA-4575 / FGSC 10137) (Verticillium wilt).